The primary structure comprises 209 residues: Uracil phosphoribosyltransferase (209 aa).

5-phospho-alpha-D-ribose 1-diphosphate is bound by residues R79, R104, and 131-139 (DPMLATGGS). Uracil-binding positions include I194 and 199–201 (GDA). Residue D200 participates in 5-phospho-alpha-D-ribose 1-diphosphate binding.

It belongs to the UPRTase family. Mg(2+) is required as a cofactor.

The enzyme catalyses UMP + diphosphate = 5-phospho-alpha-D-ribose 1-diphosphate + uracil. It functions in the pathway pyrimidine metabolism; UMP biosynthesis via salvage pathway; UMP from uracil: step 1/1. Allosterically activated by GTP. Catalyzes the conversion of uracil and 5-phospho-alpha-D-ribose 1-diphosphate (PRPP) to UMP and diphosphate. This Streptococcus equi subsp. zooepidemicus (strain MGCS10565) protein is Uracil phosphoribosyltransferase.